A 546-amino-acid polypeptide reads, in one-letter code: Protein phosphatase 1G (546 aa).

Glycine 2 carries N-myristoyl glycine lipidation. Arginine 22 is modified (omega-N-methylarginine). Residues 26 to 505 (PYGFSAMQGW…DNMTCIIICF (480 aa)) enclose the PPM-type phosphatase domain. 2 residues coordinate Mn(2+): aspartate 60 and glycine 61. Disordered regions lie at residues 116–139 (QIAGRPTEDEDEKEKVADEDDVDN) and 161–328 (GQNC…SDSG). Residue threonine 122 is modified to Phosphothreonine. Positions 123-139 (EDEDEKEKVADEDDVDN) are enriched in acidic residues. Serine 183 carries the post-translational modification Phosphoserine. Positions 259–312 (DSEDESDEAEEEEEDSEECSEEEDGYSSEEAENEEDEDDTEEAEEDDEEEEEEM) are enriched in acidic residues. At lysine 383 the chain carries N6-acetyllysine. Mn(2+) contacts are provided by aspartate 441 and aspartate 496. Positions 512–546 (ELQPESGKRKLEEVLSTEGAEENGNSDKKKKAKRD) are disordered. Serine 527 carries the phosphoserine modification.

Belongs to the PP2C family. As to quaternary structure, interacts with NOL3; may dephosphorylate NOL3. Requires Mg(2+) as cofactor. Mn(2+) serves as cofactor. Widely expressed. Most abundant in testis, skeletal muscle, and heart.

It localises to the cytoplasm. The protein resides in the membrane. It catalyses the reaction O-phospho-L-seryl-[protein] + H2O = L-seryl-[protein] + phosphate. The enzyme catalyses O-phospho-L-threonyl-[protein] + H2O = L-threonyl-[protein] + phosphate. The sequence is that of Protein phosphatase 1G (PPM1G) from Homo sapiens (Human).